The sequence spans 302 residues: MLRHVFLFLSQNKTLTKFAKAYGTRLGARRFVAGDTIESAVKTVKRLNRSGLCATIDYLGEYAASEKEANQVAEECKKAIQAIAEHQLDSELSLKLTSIGLDLSEELALTHLRAILSVAKQYDVAVTIDMEDYSHYEQTLSIYRQCKQEFEKLGTVIQAYLYRAAEDIKKMRDLKPNLRLVKGAYKESAAVAFPDKRGTDLHFQSLIKLQLLSGNYTAVATHDDDIIKFTKQLVAEHRIPASQFEFQMLYGIRPERQKELAKEGYRMRVYVPYGTDWFSYFMRRIAERPANAAFVLKGILKK.

Substrate is bound at residue Lys-95. Residue Asp-129 is part of the active site. The FAD site is built by Met-130 and Gln-158. Arg-179 is a catalytic residue. FAD-binding positions include 182 to 184 (KGA) and 221 to 222 (TH). Residue 283–284 (RR) coordinates substrate.

The protein belongs to the proline oxidase family. Requires FAD as cofactor.

The catalysed reaction is L-proline + a quinone = (S)-1-pyrroline-5-carboxylate + a quinol + H(+). The protein operates within amino-acid degradation; L-proline degradation into L-glutamate; L-glutamate from L-proline: step 1/2. In terms of biological role, converts proline to delta-1-pyrroline-5-carboxylate. This is Proline dehydrogenase 1 (fadM) from Bacillus subtilis subsp. natto.